Here is a 287-residue protein sequence, read N- to C-terminus: Polyamine aminopropyltransferase (287 aa).

One can recognise a PABS domain in the interval 5–238 (EIWYETLHAN…GIMTFAWASN (234 aa)). Position 33 (Gln33) interacts with S-methyl-5'-thioadenosine. His64 and Asp88 together coordinate spermidine. S-methyl-5'-thioadenosine-binding positions include Glu108 and 140-141 (DG). The active-site Proton acceptor is Asp158. A spermidine-binding site is contributed by 158 to 161 (DCTD). S-methyl-5'-thioadenosine is bound at residue Pro165.

Belongs to the spermidine/spermine synthase family. Homodimer or homotetramer.

The protein resides in the cytoplasm. It catalyses the reaction S-adenosyl 3-(methylsulfanyl)propylamine + putrescine = S-methyl-5'-thioadenosine + spermidine + H(+). Its pathway is amine and polyamine biosynthesis; spermidine biosynthesis; spermidine from putrescine: step 1/1. In terms of biological role, catalyzes the irreversible transfer of a propylamine group from the amino donor S-adenosylmethioninamine (decarboxy-AdoMet) to putrescine (1,4-diaminobutane) to yield spermidine. The chain is Polyamine aminopropyltransferase from Pectobacterium atrosepticum (strain SCRI 1043 / ATCC BAA-672) (Erwinia carotovora subsp. atroseptica).